Reading from the N-terminus, the 100-residue chain is Tuberoinfundibular peptide of 39 residues (100 aa).

The signal sequence occupies residues 1 to 30; that stretch reads METRQVSRSPRVRLLLLLLLLLVVPWGVRT. A propeptide spanning residues 31–59 is cleaved from the precursor; the sequence is ASGVALPPVGVLSLRPPGRAWADPATPRP.

Belongs to the parathyroid hormone family. Ligand of high affinity for the PTH2 receptor (PTH2R).

The protein resides in the secreted. Functionally, plays a role as a potent and selective agonist of PTH2R resulting in adenyl cyclase activation and intracellular calcium levels elevation. Induces protein kinase C beta activation, recruitment of beta-arrestin and PTH2R internalization. May inhibit cell proliferation via its action of PTH2R activation. Neuropeptide which may also have a role in spermatogenesis. May activate nociceptors and nociceptive circuits. The sequence is that of Tuberoinfundibular peptide of 39 residues (PTH2) from Bos taurus (Bovine).